The sequence spans 317 residues: Cold tolerance protein 1 (317 aa).

The protein belongs to the CTO1 family.

Functionally, protein required for cold tolerance. Plays a role in the regulation of phosphate uptake. This Saccharomyces cerevisiae (strain ATCC 204508 / S288c) (Baker's yeast) protein is Cold tolerance protein 1.